The chain runs to 172 residues: Ribosome maturation factor RimM (172 aa).

Residues 96-168 (EGEFYYHQII…RVDVELMEGL (73 aa)) enclose the PRC barrel domain.

Belongs to the RimM family. In terms of assembly, binds ribosomal protein uS19.

Its subcellular location is the cytoplasm. An accessory protein needed during the final step in the assembly of 30S ribosomal subunit, possibly for assembly of the head region. Essential for efficient processing of 16S rRNA. May be needed both before and after RbfA during the maturation of 16S rRNA. It has affinity for free ribosomal 30S subunits but not for 70S ribosomes. This chain is Ribosome maturation factor RimM, found in Streptococcus pyogenes serotype M18 (strain MGAS8232).